We begin with the raw amino-acid sequence, 345 residues long: NADPH dehydrogenase (345 aa).

FMN is bound at residue 23-26 (SPMC). Tyr28 contributes to the substrate binding site. Residues Ala60 and Gln102 each coordinate FMN. 164-167 (HGAH) serves as a coordination point for substrate. FMN contacts are provided by residues Arg215 and 307-308 (GR).

It belongs to the NADH:flavin oxidoreductase/NADH oxidase family. NamA subfamily. In terms of assembly, homotetramer. FMN serves as cofactor.

It carries out the reaction A + NADPH + H(+) = AH2 + NADP(+). Its function is as follows. Catalyzes the reduction of the double bond of an array of alpha,beta-unsaturated aldehydes and ketones. It also reduces the nitro group of nitroester and nitroaromatic compounds. It could have a role in detoxification processes. This chain is NADPH dehydrogenase, found in Bacillus cereus (strain ZK / E33L).